A 236-amino-acid chain; its full sequence is Purine nucleoside phosphorylase DeoD-type (236 aa).

Position 5 (His-5) interacts with a purine D-ribonucleoside. Residues Gly-21, Arg-25, Arg-44, and 88 to 91 (RIGS) each bind phosphate. A purine D-ribonucleoside is bound by residues 180 to 182 (EME) and 204 to 205 (SD). The active-site Proton donor is the Asp-205.

This sequence belongs to the PNP/UDP phosphorylase family. As to quaternary structure, homohexamer; trimer of homodimers.

It carries out the reaction a purine D-ribonucleoside + phosphate = a purine nucleobase + alpha-D-ribose 1-phosphate. It catalyses the reaction a purine 2'-deoxy-D-ribonucleoside + phosphate = a purine nucleobase + 2-deoxy-alpha-D-ribose 1-phosphate. Catalyzes the reversible phosphorolytic breakdown of the N-glycosidic bond in the beta-(deoxy)ribonucleoside molecules, with the formation of the corresponding free purine bases and pentose-1-phosphate. The protein is Purine nucleoside phosphorylase DeoD-type of Hahella chejuensis (strain KCTC 2396).